The following is a 310-amino-acid chain: Tagatose-6-phosphate kinase (310 aa).

This sequence belongs to the carbohydrate kinase PfkB family. LacC subfamily.

It carries out the reaction D-tagatofuranose 6-phosphate + ATP = D-tagatofuranose 1,6-bisphosphate + ADP + H(+). It functions in the pathway carbohydrate metabolism; D-tagatose 6-phosphate degradation; D-glyceraldehyde 3-phosphate and glycerone phosphate from D-tagatose 6-phosphate: step 1/2. The protein is Tagatose-6-phosphate kinase of Streptococcus uberis (strain ATCC BAA-854 / 0140J).